The primary structure comprises 677 residues: Fermitin family homolog 1 (677 aa).

Residues 96–653 form the FERM domain; sequence MLRLRLPNAK…HEYIGGYIFL (558 aa). Residues 157–181 form a disordered region; the sequence is KEPVIEDILNLESSSTSSGSPVSPG. Over residues 169-181 the composition is skewed to low complexity; it reads SSSTSSGSPVSPG. Ser-170 and Ser-179 each carry phosphoserine. The 97-residue stretch at 377–473 folds into the PH domain; the sequence is KLFRPKKLML…WMAACILASK (97 aa).

This sequence belongs to the kindlin family. In terms of assembly, interacts with the cytoplasmic domain of integrins ITGB1 and ITGB3.

The protein localises to the cytoplasm. The protein resides in the cytoskeleton. It is found in the cell junction. It localises to the focal adhesion. Its subcellular location is the cell projection. The protein localises to the ruffle membrane. Functionally, involved in cell adhesion. Contributes to integrin activation. When coexpressed with talin, potentiates activation of ITGA2B. Required for normal keratinocyte proliferation. Required for normal polarization of basal keratinocytes in skin, and for normal cell shape. Required for normal adhesion of keratinocytes to fibronectin and laminin, and for normal keratinocyte migration to wound sites. This Mus musculus (Mouse) protein is Fermitin family homolog 1 (Fermt1).